A 1087-amino-acid polypeptide reads, in one-letter code: DNA polymerase II large subunit (1087 aa).

It belongs to the archaeal DNA polymerase II family. Heterodimer of a large subunit and a small subunit.

It carries out the reaction DNA(n) + a 2'-deoxyribonucleoside 5'-triphosphate = DNA(n+1) + diphosphate. The catalysed reaction is Exonucleolytic cleavage in the 3'- to 5'-direction to yield nucleoside 5'-phosphates.. In terms of biological role, possesses two activities: a DNA synthesis (polymerase) and an exonucleolytic activity that degrades single-stranded DNA in the 3'- to 5'-direction. Has a template-primer preference which is characteristic of a replicative DNA polymerase. This chain is DNA polymerase II large subunit (polC), found in Thermoplasma acidophilum (strain ATCC 25905 / DSM 1728 / JCM 9062 / NBRC 15155 / AMRC-C165).